The sequence spans 464 residues: ATP-dependent protease ATPase subunit HslU (464 aa).

ATP-binding positions include Ile-19, Gly-61–Glu-66, Asp-277, Glu-342, and Arg-414.

It belongs to the ClpX chaperone family. HslU subfamily. A double ring-shaped homohexamer of HslV is capped on each side by a ring-shaped HslU homohexamer. The assembly of the HslU/HslV complex is dependent on binding of ATP.

The protein localises to the cytoplasm. In terms of biological role, ATPase subunit of a proteasome-like degradation complex; this subunit has chaperone activity. The binding of ATP and its subsequent hydrolysis by HslU are essential for unfolding of protein substrates subsequently hydrolyzed by HslV. HslU recognizes the N-terminal part of its protein substrates and unfolds these before they are guided to HslV for hydrolysis. This Lactobacillus johnsonii (strain CNCM I-12250 / La1 / NCC 533) protein is ATP-dependent protease ATPase subunit HslU.